Consider the following 266-residue polypeptide: PDZ domain-containing protein 9 (266 aa).

A PDZ domain is found at 27–109 (KVIQTKLTVG…GTVLQIKAYR (83 aa)).

The sequence is that of PDZ domain-containing protein 9 (Pdzd9) from Mus musculus (Mouse).